The primary structure comprises 507 residues: Cytochrome P450 52A7 (507 aa).

A helical membrane pass occupies residues L6 to I26. C456 provides a ligand contact to heme.

The protein belongs to the cytochrome P450 family. Heme serves as cofactor.

The protein resides in the membrane. In terms of biological role, together with an NADPH cytochrome P450 the enzyme system catalyzes the terminal hydroxylation as the first step in the assimilation of alkanes and fatty acids. Preferentially hydroxylates lauric acid. This chain is Cytochrome P450 52A7 (CYP52A7), found in Candida tropicalis (Yeast).